The chain runs to 953 residues: 26S proteasome non-ATPase regulatory subunit 1 (953 aa).

N-acetylmethionine is present on methionine 1. Threonine 273 bears the Phosphothreonine mark. Residues 279–318 form a disordered region; that stretch reads PGSTNTGTVPGSEKDSDSMETEEKTSSAFVGKTPEASPEP. Serine 290 carries the phosphoserine modification. Over residues 290-303 the composition is skewed to basic and acidic residues; sequence SEKDSDSMETEEKT. Residue lysine 310 is modified to N6-acetyllysine. Threonine 311 carries the phosphothreonine modification. At serine 315 the chain carries Phosphoserine. PC repeat units lie at residues 403 to 436, 441 to 474, 476 to 510, 511 to 545, 547 to 580, 581 to 616, 617 to 649, 651 to 685, 686 to 726, and 729 to 761; these read TATA…PGSA, GGLY…DIVR, GGSL…VTGE, AAGL…EKIL, GLAV…ILRR, SGMY…DVRR, AAVE…PHVR, GAAM…YVRQ, GALI…DVMA, and GAIL…PSVV. Position 720 is an N6-acetyllysine (lysine 720). Threonine 830 bears the Phosphothreonine mark. Serine 834 carries the post-translational modification Phosphoserine. Disordered stretches follow at residues 839–881 and 930–953; these read AKKK…LDNP and AHGP…YIDD. Basic and acidic residues-rich tracts occupy residues 842 to 852 and 859 to 872; these read KEKEKEKKEEE and AEKK…KEPE. A compositionally biased stretch (acidic residues) spans 936–953; that stretch reads EEEEQEPEPPEPFEYIDD.

The protein belongs to the proteasome subunit S1 family. Component of the 19S proteasome regulatory particle complex. The 26S proteasome consists of a 20S core particle (CP) and two 19S regulatory subunits (RP). The regulatory particle is made of a lid composed of 9 subunits, a base containing 6 ATPases and few additional components including PSMD1. Interacts with ADRM1. Interacts with ZFAND1.

Functionally, component of the 26S proteasome, a multiprotein complex involved in the ATP-dependent degradation of ubiquitinated proteins. This complex plays a key role in the maintenance of protein homeostasis by removing misfolded or damaged proteins, which could impair cellular functions, and by removing proteins whose functions are no longer required. Therefore, the proteasome participates in numerous cellular processes, including cell cycle progression, apoptosis, or DNA damage repair. This Homo sapiens (Human) protein is 26S proteasome non-ATPase regulatory subunit 1 (PSMD1).